The primary structure comprises 499 residues: MAKQKIRVRYAPSPTGHLHIGNARTALFNYLFARHNKGTMVLRIEDTDQKRNVEGGSKSQMENLHWLGIDWDEGPDKGGDFGPYRQSERKDIYNKYIQQLIDEGKAYYSYKTEEELEAQREEQRAMGIAPHYTYEYEGMTADEIKEAQAAAEAKGLKPVVRIHIPENRTYAWEDMVKGKVSFESDTIGGDFVIQKRDGMPTYNFAVVIDDHLMEITHVLRGDDHVANTPKQLVVYEALGWEPPKFGHMTLIINSETGKKLSKRDESVLQFIEQYRDLGYLPDAMFNFITLLGWSPVGESEIFSQRELIKSFDPKRLSKSPAAFDQKKLEWINNQYVKKADRDLLLDLALNNLQEAGLVDKEISPEKMEWVRQLVNIYAVQMSYTKQIVDIAKIFFEEAPELSDAEIEEIKKDDARPVIEEFKKQLNAVPRFTAVQAMNAIQATRRETGVKGRKLFMPIRIAATRSMVGPGIGEAIELMGKEKVNKHIDLTLKQLSDLGL.

The short motif at 12–22 (PSPTGHLHIGN) is the 'HIGH' region element. A 'KMSKS' region motif is present at residues 259 to 263 (KLSKR). Lysine 262 contacts ATP.

This sequence belongs to the class-I aminoacyl-tRNA synthetase family. Glutamate--tRNA ligase type 1 subfamily. In terms of assembly, monomer.

The protein localises to the cytoplasm. The enzyme catalyses tRNA(Glu) + L-glutamate + ATP = L-glutamyl-tRNA(Glu) + AMP + diphosphate. In terms of biological role, catalyzes the attachment of glutamate to tRNA(Glu) in a two-step reaction: glutamate is first activated by ATP to form Glu-AMP and then transferred to the acceptor end of tRNA(Glu). This chain is Glutamate--tRNA ligase, found in Lactobacillus johnsonii (strain CNCM I-12250 / La1 / NCC 533).